The primary structure comprises 243 residues: Thiocyanate hydrolase subunit gamma (243 aa).

Residues C128, C131, S132, and C133 each contribute to the Co(3+) site. Position 131 is a cysteine sulfinic acid (-SO2H) (C131). The residue at position 133 (C133) is a Cysteine sulfenic acid (-SOH).

The protein belongs to the nitrile hydratase subunit alpha family. As to quaternary structure, heterododecamer consisting of 4 alpha, 4 beta, and 4 gamma subunits. Co(3+) is required as a cofactor.

The catalysed reaction is thiocyanate + H2O + 2 H(+) = carbonyl sulfide + NH4(+). It participates in organosulfur degradation; thiocyanate degradation. Its function is as follows. Involved in the degradation of thiocyanate. This chain is Thiocyanate hydrolase subunit gamma (scnC), found in Thiobacillus thioparus.